The primary structure comprises 499 residues: Bestrophin homolog 22 (499 aa).

Helical transmembrane passes span 29-49 (WKAV…ISCI), 77-97 (IPLT…WGSI), 235-255 (LVYP…CLIG), and 267-287 (GIDL…MGWM). Positions 417–432 (HNAKHAKQRGLERANS) are enriched in basic and acidic residues. Disordered regions lie at residues 417–455 (HNAK…ANGS) and 474–499 (TSNP…TSRH).

Belongs to the anion channel-forming bestrophin (TC 1.A.46) family. Calcium-sensitive chloride channel subfamily. In terms of assembly, forms oligomers.

It is found in the cell membrane. Functionally, forms chloride channels. In Caenorhabditis elegans, this protein is Bestrophin homolog 22 (best-22).